Here is a 740-residue protein sequence, read N- to C-terminus: 1,4-alpha-glucan branching enzyme GlgB (740 aa).

Asp-419 (nucleophile) is an active-site residue. Glu-472 serves as the catalytic Proton donor.

The protein belongs to the glycosyl hydrolase 13 family. GlgB subfamily. As to quaternary structure, monomer.

The catalysed reaction is Transfers a segment of a (1-&gt;4)-alpha-D-glucan chain to a primary hydroxy group in a similar glucan chain.. It participates in glycan biosynthesis; glycogen biosynthesis. Its function is as follows. Catalyzes the formation of the alpha-1,6-glucosidic linkages in glycogen by scission of a 1,4-alpha-linked oligosaccharide from growing alpha-1,4-glucan chains and the subsequent attachment of the oligosaccharide to the alpha-1,6 position. In Thiobacillus denitrificans (strain ATCC 25259 / T1), this protein is 1,4-alpha-glucan branching enzyme GlgB.